Here is a 426-residue protein sequence, read N- to C-terminus: Inhibin beta A chain (426 aa).

Positions 1–20 (MPLLWLRGFLLASCWIIVKS) are cleaved as a signal peptide. A propeptide spanning residues 21–310 (SPTPGSEGHS…EDHPHRRRRR (290 aa)) is cleaved from the precursor. N-linked (GlcNAc...) asparagine glycosylation occurs at N165. The segment covering 177–186 (QQQKHPQGSS) has biased composition (polar residues). Disordered regions lie at residues 177–201 (QQQK…MEER) and 260–291 (KKKK…SHRP). The span at 263-275 (KEEEGEGKKKDGG) shows a compositional bias: basic and acidic residues. Cystine bridges form between C314–C322, C321–C391, C350–C423, and C354–C425.

The protein belongs to the TGF-beta family. In terms of assembly, dimeric, linked by one or more disulfide bonds. Inhibin A is a dimer of alpha/INHA and beta-A/INHBA. Activin A is a homodimer of beta-A/INHBA. Activin AB is a dimer of beta-A/INHBA and beta-B/INHBB. Interacts with FST and FSTL3; these interactions prevent activin A interaction to its type II receptor. Activin A interacts with ACVR2A. Activin A interacts with BMPR2. Inhibin A interacts with ACVR1; this interaction creates a non-signaling complex (NSC) that inhibits ACVR1-mediated BMP signaling. Inhibin A interacts with ACVR2A.

The protein resides in the secreted. Inhibins/activins are involved in regulating a number of diverse functions such as hypothalamic and pituitary hormone secretion, gonadal hormone secretion, germ cell development and maturation, erythroid differentiation, insulin secretion, nerve cell survival, embryonic axial development or bone growth, depending on their subunit composition. In terms of biological role, activin A is a homodimer of INHBA that plays a role in several essential biological processes including embryonic development, stem cell maintenance and differentiation, haematopoiesis, cell proliferation and tissue fibrosis. Signals through type I (such as ACVR1B or ACVR1C) and type II receptors (such as ACVR2A, ACVR2B or BMPR2) which, upon ligand binding, phosphorylate SMAD2 and SMAD3 intracellular signaling mediators that form a complex with SMAD4, translocate to the nucleus and modulate gene expression. Can also activate alternative non-canonical intracellular signaling pathways including the p38 MAPK, extracellular signal-regulated kinases 1/2 (ERK1/2) and c-Jun N-terminal kinases (JNKs) to modulate cell migration and differentiation. Alternatively, promotes osteoblastic differentiation via ACVRL1-SMAD1/5/9 pathway. In addition, can engage the type I receptor ACVR1 to form an ACVR1-activin A-type II receptor non-signaling complex (NSC) that renders receptors unavailable for engagement with BMPs, hence resulting in an apparent inhibition of ACVR1-mediated BMP signaling. Functionally, inhibin A is a dimer of alpha/INHA and beta-A/INHBA that functions as a feedback regulator in the hypothalamic-pituitary-gonadal (HPG) axis. Inhibits the secretion of FSH from the anterior pituitary gland by acting on pituitary gonadotrope cells. Antagonizes activin A by binding to the proteoglycan, betaglycan, and forming a stable complex with and, thereby, sequestering type II activin receptors while excluding type I receptor. The chain is Inhibin beta A chain (INHBA) from Equus caballus (Horse).